The sequence spans 1176 residues: Chromosome partition protein Smc (1176 aa).

32–39 (PNGCGKSN) contacts ATP. Positions 169–506 (GVSRYKERRR…VKLQEDVQKQ (338 aa)) form a coiled coil. The 103-residue stretch at 521–623 (LGRLWQKLHI…TAPDLGQALA (103 aa)) folds into the SMC hinge domain. Coiled-coil stretches lie at residues 653–947 (DSEQ…LAAM) and 987–1024 (ERKE…LQAT).

It belongs to the SMC family. Homodimer.

The protein resides in the cytoplasm. In terms of biological role, required for chromosome condensation and partitioning. This Bordetella petrii (strain ATCC BAA-461 / DSM 12804 / CCUG 43448) protein is Chromosome partition protein Smc.